The chain runs to 396 residues: Bifunctional enzyme Fae/Hps (396 aa).

Positions 1-161 (MYQIGEALIG…YEKDRGVHAI (161 aa)) are formaldehyde-activating enzyme. The active-site Proton donor is the H17. Residues D19, L48, K66, T68, and Q83 each coordinate substrate. A 3-hexulose-6-phosphate synthase region spans residues 162-396 (MGYKITRLWD…IDQYRIMTDF (235 aa)).

In the N-terminal section; belongs to the formaldehyde-activating enzyme family. The protein in the C-terminal section; belongs to the HPS/KGPDC family. HPS subfamily.

It carries out the reaction 5,6,7,8-tetrahydromethanopterin + formaldehyde = 5,10-methylenetetrahydromethanopterin + H2O. The enzyme catalyses D-ribulose 5-phosphate + formaldehyde = D-arabino-hex-3-ulose 6-phosphate. It participates in carbohydrate biosynthesis; D-ribose 5-phosphate biosynthesis. In terms of biological role, catalyzes the condensation of formaldehyde with tetrahydromethanopterin (H(4)MPT) to 5,10-methylenetetrahydromethanopterin. Its function is as follows. Catalyzes the reversible formation of ribulose-5-phosphate and formaldehyde from 3-hexulose-6-phosphate. This Methanocella arvoryzae (strain DSM 22066 / NBRC 105507 / MRE50) protein is Bifunctional enzyme Fae/Hps.